The primary structure comprises 134 residues: Profilin-2 (134 aa).

Residues cysteine 13 and cysteine 118 are joined by a disulfide bond. The short motif at 84–100 (AVIRGKKGSGGITIKKT) is the Involved in PIP2 interaction element. Threonine 114 carries the post-translational modification Phosphothreonine.

The protein belongs to the profilin family. As to quaternary structure, occurs in many kinds of cells as a complex with monomeric actin in a 1:1 ratio. Phosphorylated by MAP kinases.

The protein localises to the cytoplasm. The protein resides in the cytoskeleton. Functionally, binds to actin and affects the structure of the cytoskeleton. At high concentrations, profilin prevents the polymerization of actin, whereas it enhances it at low concentrations. The sequence is that of Profilin-2 from Olea europaea (Common olive).